A 77-amino-acid polypeptide reads, in one-letter code: MRGCTLLLFSEAPFLREQEVAVITAYRNVFIQDDPGMHFRWVIRNAEGQRRWRCRNSEPDAGKVLNTRLASDGPLRQ.

Belongs to the UPF0401 family.

This chain is UPF0401 protein c0279, found in Escherichia coli O6:H1 (strain CFT073 / ATCC 700928 / UPEC).